Reading from the N-terminus, the 380-residue chain is Autophagy protein 5 (380 aa).

Lys138 participates in a covalent cross-link: Glycyl lysine isopeptide (Lys-Gly) (interchain with G-Cter in ATG12). Over residues 194–203 (TSSVEGQQGS) the composition is skewed to polar residues. 2 disordered regions span residues 194 to 215 (TSSV…GKPC) and 283 to 309 (RIPD…TPRS).

The protein belongs to the ATG5 family. In terms of assembly, conjugated to ATG12. In terms of processing, conjugated to ATG12; which is essential for autophagy.

Its subcellular location is the cytoplasm. Required for autophagy. Conjugation to ATG12 is essential for plant nutrient recycling. The sequence is that of Autophagy protein 5 (ATG5) from Oryza sativa subsp. indica (Rice).